We begin with the raw amino-acid sequence, 78 residues long: Small ribosomal subunit protein uS17 (78 aa).

The protein belongs to the universal ribosomal protein uS17 family. Part of the 30S ribosomal subunit.

In terms of biological role, one of the primary rRNA binding proteins, it binds specifically to the 5'-end of 16S ribosomal RNA. This Parvibaculum lavamentivorans (strain DS-1 / DSM 13023 / NCIMB 13966) protein is Small ribosomal subunit protein uS17.